The primary structure comprises 149 residues: Transcriptional regulator MraZ (149 aa).

2 consecutive SpoVT-AbrB domains span residues 7–54 (KYVN…GISH) and 83–126 (AVQL…QPQN).

Belongs to the MraZ family. Forms oligomers.

It is found in the cytoplasm. The protein resides in the nucleoid. The polypeptide is Transcriptional regulator MraZ (Rickettsia rickettsii (strain Sheila Smith)).